A 521-amino-acid chain; its full sequence is Probable glycine dehydrogenase (decarboxylating) subunit 2 (521 aa).

N6-(pyridoxal phosphate)lysine is present on lysine 279.

The protein belongs to the GcvP family. C-terminal subunit subfamily. As to quaternary structure, the glycine cleavage system is composed of four proteins: P, T, L and H. In this organism, the P 'protein' is a heterodimer of two subunits. Pyridoxal 5'-phosphate serves as cofactor.

It carries out the reaction N(6)-[(R)-lipoyl]-L-lysyl-[glycine-cleavage complex H protein] + glycine + H(+) = N(6)-[(R)-S(8)-aminomethyldihydrolipoyl]-L-lysyl-[glycine-cleavage complex H protein] + CO2. In terms of biological role, the glycine cleavage system catalyzes the degradation of glycine. The P protein binds the alpha-amino group of glycine through its pyridoxal phosphate cofactor; CO(2) is released and the remaining methylamine moiety is then transferred to the lipoamide cofactor of the H protein. The chain is Probable glycine dehydrogenase (decarboxylating) subunit 2 from Staphylothermus marinus (strain ATCC 43588 / DSM 3639 / JCM 9404 / F1).